Here is a 478-residue protein sequence, read N- to C-terminus: Serine hydroxymethyltransferase (478 aa).

(6S)-5,6,7,8-tetrahydrofolate is bound by residues Leu-161 and 165–167; that span reads GHL. Lys-273 carries the post-translational modification N6-(pyridoxal phosphate)lysine. Glu-291 provides a ligand contact to (6S)-5,6,7,8-tetrahydrofolate.

This sequence belongs to the SHMT family. In terms of assembly, homodimer. It depends on pyridoxal 5'-phosphate as a cofactor.

It localises to the cytoplasm. The enzyme catalyses (6R)-5,10-methylene-5,6,7,8-tetrahydrofolate + glycine + H2O = (6S)-5,6,7,8-tetrahydrofolate + L-serine. Its pathway is one-carbon metabolism; tetrahydrofolate interconversion. It functions in the pathway amino-acid biosynthesis; glycine biosynthesis; glycine from L-serine: step 1/1. Functionally, catalyzes the reversible interconversion of serine and glycine with tetrahydrofolate (THF) serving as the one-carbon carrier. This reaction serves as the major source of one-carbon groups required for the biosynthesis of purines, thymidylate, methionine, and other important biomolecules. Also exhibits THF-independent aldolase activity toward beta-hydroxyamino acids, producing glycine and aldehydes, via a retro-aldol mechanism. The chain is Serine hydroxymethyltransferase from Salinispora tropica (strain ATCC BAA-916 / DSM 44818 / JCM 13857 / NBRC 105044 / CNB-440).